The following is a 592-amino-acid chain: Signal peptide peptidase-like 2B (592 aa).

The N-terminal stretch at 1 to 25 (MAAAVAAALARLLAAFLLLAAQVAC) is a signal peptide. Residues 26–174 (EYGMVHVVSQ…APKEPVLDYN (149 aa)) lie on the Lumenal side of the membrane. The 79-residue stretch at 71 to 149 (TASLLCSAAD…VALLSYKDML (79 aa)) folds into the PA domain. Residues N97 and N129 are each glycosylated (N-linked (GlcNAc...) asparagine). The helical transmembrane segment at 175–195 (MVIIFIMAVGTVAIGGYWAGS) threads the bilayer. At 196-221 (RDVKKRYMKHKRDDGPEKQEDEAVDV) the chain is on the cytoplasmic side. The helical transmembrane segment at 222–244 (TPVMTCVFVVMCCSMLVLLYYFY) threads the bilayer. The Lumenal segment spans residues 245-248 (DLLV). Residues 249–271 (YVVIGIFCLASATGLYSCLAPCV) form a helical membrane-spanning segment. The Cytoplasmic segment spans residues 272–293 (RRLPFGKCRIPNNSLPYFHKRP). The helical transmembrane segment at 294-314 (QARMLLLALFCVAVSVVWGVF) threads the bilayer. Over 315 to 319 (RNEDQ) the chain is Lumenal. The chain crosses the membrane as a helical span at residues 320–340 (WAWVLQDALGIAFCLYMLKTI). The Cytoplasmic segment spans residues 341–348 (RLPTFKAC). The helical transmembrane segment at 349 to 369 (TLLLLVLFLYDIFFVFITPFL) threads the bilayer. Residue D359 is part of the active site. The Lumenal portion of the chain corresponds to 370–412 (TKSGSSIMVEVATGPSDSATREKLPMVLKVPRLNSSPLALCDR). A helical membrane pass occupies residues 413 to 433 (PFSLLGFGDILVPGLLVAYCH). The active site involves D421. Topologically, residues 434-445 (RFDIQVQSSRVY) are cytoplasmic. Residues 446 to 466 (FVACTIAYGVGLLVTFVALAL) form a helical membrane-spanning segment. Over 467-470 (MQRG) the chain is Lumenal. A helical transmembrane segment spans residues 471 to 491 (QPALLYLVPCTLVTSCAVALW). The PAL signature appears at 472–474 (PAL). Topologically, residues 492-592 (RRELGVFWTG…SPVTQPGASA (101 aa)) are cytoplasmic. A compositionally biased stretch (pro residues) spans 512–524 (PWAPAPADGPQPP). Residues 512 to 592 (PWAPAPADGP…SPVTQPGASA (81 aa)) form a disordered region. Over residues 580-592 (AQPSPVTQPGASA) the composition is skewed to polar residues.

This sequence belongs to the peptidase A22B family. Monomer. Homodimer. Interacts with ITM2B. Interacts with TNF. Interacts with the simian foamy virus envelope glycoprotein gp130 and its processed leader peptide gp18LP; preferentially interacts with the leader peptide gp18LP. In terms of processing, glycosylated. As to expression, expressed predominantly in adrenal cortex and mammary gland.

The protein resides in the cell membrane. The protein localises to the golgi apparatus membrane. It is found in the lysosome membrane. Its subcellular location is the endosome membrane. It localises to the membrane. Intramembrane-cleaving aspartic protease (I-CLiP) that cleaves type II membrane signal peptides in the hydrophobic plane of the membrane. Functions in ITM2B and TNF processing. Catalyzes the intramembrane cleavage of the anchored fragment of shed TNF-alpha (TNF), which promotes the release of the intracellular domain (ICD) for signaling to the nucleus. May play a role in the regulation of innate and adaptive immunity. Catalyzes the intramembrane cleavage of the simian foamy virus processed leader peptide gp18 of the envelope glycoprotein gp130 dependently of prior ectodomain shedding by furin or furin-like proprotein convertase (PC)-mediated cleavage proteolysis. The sequence is that of Signal peptide peptidase-like 2B from Homo sapiens (Human).